The following is a 201-amino-acid chain: MGLISGKVCVFIFVFALVAEFSFGNVEVNDDKHFFHKPRPFLHKPRPFLHKHGIYKKGFGKGLGGGGGLGGGGGLGGGGGLGGGGGLGGGGGLGGGGGLGGGSGLGGGGGLGGGSGLGGGGGLGGGGGGGLGGGGGLGGGAGGGYGGGAGGGLGGGGGIGGGGGFGGGGGGGFGGGAGGGFGKGIGGGGGLGGGYVGGGHH.

The first 24 residues, 1 to 24, serve as a signal peptide directing secretion; the sequence is MGLISGKVCVFIFVFALVAEFSFG. A run of 21 repeats spans residues 62 to 67, 68 to 73, 74 to 79, 80 to 85, 86 to 91, 92 to 97, 98 to 103, 104 to 109, 110 to 115, 116 to 121, 122 to 129, 130 to 135, 136 to 143, 144 to 151, 152 to 157, 158 to 163, 164 to 169, 170 to 175, 176 to 182, 184 to 189, and 190 to 194. The tract at residues 62 to 194 is 21 X 6 AA approximate tandem repeats of G-L-G-G-G-G, Gly-rich; the sequence is GLGGGGGLGG…IGGGGGLGGG (133 aa).

This is Glycine-rich protein 23 from Arabidopsis thaliana (Mouse-ear cress).